Consider the following 239-residue polypeptide: Phosducin-like protein 2 (239 aa).

Residues 26–87 (TEDELFDLIK…IQQMKVEAEL (62 aa)) adopt a coiled-coil conformation. The region spanning 36–196 (EAAEMATEAE…TTVNDIEWQL (161 aa)) is the Phosducin domain. The span at 42 to 59 (TEAEKNEKLENASLKDLK) shows a compositional bias: basic and acidic residues. Disordered stretches follow at residues 42-64 (TEAEKNEKLENASLKDLKDMEDD) and 212-239 (ITLARKKSQKSRYSKADSDESDNSDSDD). Residues 90 to 239 (FGELKEISEP…DESDNSDSDD (150 aa)) are thioredoxin fold. Basic residues predominate over residues 214–224 (LARKKSQKSRY). Acidic residues predominate over residues 230-239 (DESDNSDSDD).

This sequence belongs to the phosducin family.

The chain is Phosducin-like protein 2 (phlp2) from Dictyostelium discoideum (Social amoeba).